A 344-amino-acid chain; its full sequence is Intraflagellar transport protein 46 (344 aa).

Residues 1–16 (MDDSMDYPDRDGDDLD) are compositionally biased toward acidic residues. Residues 1 to 100 (MDDSMDYPDR…IANSDEAPPG (100 aa)) are disordered. Positions 18-30 (FQGTARSQVVQNQ) are enriched in polar residues.

It belongs to the IFT46 family. Component of the IFT complex B, the core composed of IFT25, IFT27, IFT46, IFT52, IFT74, IFT81 and IFT88 as well as associated subunits IFT20, IFT57, IFT80 and IFT172. Interacts with IFT25, IFT52, IFT70, IFT88 and DAW1.

The protein resides in the cytoplasm. The protein localises to the cytoskeleton. It localises to the cilium basal body. Its subcellular location is the cell projection. It is found in the cilium. In terms of biological role, forms part of a complex involved in intraflagellar transport (IFT), the bi-directional movement of particles required for the assembly, maintenance and functioning of primary cilia. Plays a role in maintaining IFT complex B stability. The chain is Intraflagellar transport protein 46 from Chlamydomonas reinhardtii (Chlamydomonas smithii).